The chain runs to 119 residues: Ubiquinone biosynthesis accessory factor UbiK (119 aa).

Residues 79 to 99 (LLRTREKLALLEQRLSELEAR) adopt a coiled-coil conformation. The segment covering 96 to 106 (LEARDKPEEVK) has biased composition (basic and acidic residues). The interval 96–119 (LEARDKPEEVKPAPAIPPVDPQQE) is disordered. The segment covering 109–119 (PAIPPVDPQQE) has biased composition (pro residues).

It belongs to the UbiK family. In terms of assembly, homotrimer.

Its subcellular location is the cytoplasm. The protein operates within cofactor biosynthesis; ubiquinone biosynthesis. Functionally, required for efficient ubiquinone (coenzyme Q) biosynthesis under aerobic conditions. UbiK is probably an accessory factor of Ubi enzymes and facilitates ubiquinone biosynthesis by acting as an assembly factor, a targeting factor, or both. Dispensable for ubiquinone biosynthesis under anaerobiosis. Required for proliferation in macrophages and virulence in mice. Significantly contributes to colonization and invasion as well as host inflammation and innate immunity after infection. In vitro, has membrane fusogenic activity at acidic pH. The sequence is that of Ubiquinone biosynthesis accessory factor UbiK from Salmonella typhimurium (strain LT2 / SGSC1412 / ATCC 700720).